The primary structure comprises 565 residues: MLSVKQELLAALAGELETLSPGAGARAAFESPKVAAHGDFACTAAMQLAKPLKLNPRSLGEQLKAALEATPSFQRWVDAIEIAGPGFLNIRLKPAAKQQIIREVLEQAEKFGWLADRGAKMLVEFVSANPTGPLHVGHGRQAALGDAICNLYATQGWGVHREFYYNDAGVQIDTLTKSTQLRAKGFKPGDECWPIDPENPASKAFYNGSYIQDIADDFLACKTVKADDREFTANGDVEDYDNIRQFAVAYLRNEQDKDLQAFNLHFDEYYLESSLYTNGYVEDAVQRLIAGGHTYELDGALWLKSTDYGDDKDRVMRKQDGNYTYFVPDVAYHIQKFKRGYSKVVNIQGTDHHGTIARVRAGLQAADVGIPAGYPDYVLHTMVRVVRGGEEVKISKRAGSYVTLRDLIEWTSKDAVRFFLLSRKPDTEYTFDVDLAVAQNNDNPVYYVQYAHARICSVLAAWGGDAATLKDVDLSALEGPQAQALMLQLAKYPAMLTSAAEGNAPHDVTFYLRELASLYHSYYDAERILVDDEKVKLARLALISATRQVLHNGLAVLGVSAPQRM.

Residues 128 to 138 carry the 'HIGH' region motif; that stretch reads ANPTGPLHVGH.

The protein belongs to the class-I aminoacyl-tRNA synthetase family. As to quaternary structure, monomer.

The protein resides in the cytoplasm. It carries out the reaction tRNA(Arg) + L-arginine + ATP = L-arginyl-tRNA(Arg) + AMP + diphosphate. The chain is Arginine--tRNA ligase from Delftia acidovorans (strain DSM 14801 / SPH-1).